A 112-amino-acid chain; its full sequence is MTELAQMKCEACQADAPKVSDAELGELVRMIPDWTVEVRDGIMQLERVYKFKNFKLAMAFTNKLADLAEADFHHPGILTEWGKVTVTWWSHSIKGLHKNDFIMAAKTDTLLD.

It belongs to the pterin-4-alpha-carbinolamine dehydratase family.

The catalysed reaction is (4aS,6R)-4a-hydroxy-L-erythro-5,6,7,8-tetrahydrobiopterin = (6R)-L-erythro-6,7-dihydrobiopterin + H2O. This is Putative pterin-4-alpha-carbinolamine dehydratase from Shewanella piezotolerans (strain WP3 / JCM 13877).